A 1072-amino-acid chain; its full sequence is Guanylyl cyclase C (1072 aa).

The signal sequence occupies residues 1–22 (MTSLLGLAVRLLLFQPTLMFWA). Residues 23–429 (SQVRQKCHNG…PNDVPGLGPQ (407 aa)) are Extracellular-facing. N-linked (GlcNAc...) asparagine glycosylation is found at Asn31, Asn74, Asn78, Asn187, Asn194, Asn306, and Asn401. A helical transmembrane segment spans residues 430-453 (ILMIAVFTLTGIVVVLLLIALLVL). Over 454 to 1072 (RKYRRDHELR…NNSDHDSTYF (619 aa)) the chain is Cytoplasmic. Positions 488–748 (LKIDDDRRRD…KIESTLAKIF (261 aa)) constitute a Protein kinase domain. The Guanylate cyclase domain maps to 823–953 (TIYFSDIVGF…DTVNTASRME (131 aa)).

This sequence belongs to the adenylyl cyclase class-4/guanylyl cyclase family. Homotrimer. Interacts via its C-terminal region with PDZK2. Interacts with the lectin chaperone VIP36. Glycosylation at Asn-74 and/or Asn-78 is required for interaction with VIP36 while glycosylation at Asn-401 modulates ligand-mediated GC-C activation.

The protein resides in the cell membrane. It localises to the endoplasmic reticulum membrane. It catalyses the reaction GTP = 3',5'-cyclic GMP + diphosphate. In terms of biological role, guanylyl cyclase that catalyzes synthesis of cyclic GMP (cGMP) from GTP. Receptor for the E.coli heat-stable enterotoxin; E.coli enterotoxin markedly stimulates the accumulation of cGMP in mammalian cells expressing GUCY2C. This Rattus norvegicus (Rat) protein is Guanylyl cyclase C (Gucy2c).